A 347-amino-acid polypeptide reads, in one-letter code: Rhodopsin (347 aa).

Topologically, residues 1–33 are extracellular; sequence TEGPDFYIPMVNTTGVVRSPYEYPQYYLVNPAA. Asparagine 12 carries N-linked (GlcNAc...) asparagine glycosylation. A helical membrane pass occupies residues 34–58; sequence YAVLGAYMFFLIIVGFPINFLTLYV. The Cytoplasmic portion of the chain corresponds to 59–70; it reads TLEHKKLRTPLN. Residues 71 to 93 form a helical membrane-spanning segment; that stretch reads YILLNLAVADLFMVIGGFTTTMY. Over 94–107 the chain is Extracellular; it reads SSMHGYFVLGRLGC. Cysteines 107 and 184 form a disulfide. The chain crosses the membrane as a helical span at residues 108–130; it reads NIEGFFATLGGMISLWSLAVLAI. The 'Ionic lock' involved in activated form stabilization motif lies at 131–133; the sequence is ERW. The Cytoplasmic segment spans residues 131–149; it reads ERWVVVCKPISNFRFGENH. A helical transmembrane segment spans residues 150–170; the sequence is AIMGVSLTWVMALACTVPPLV. Topologically, residues 171–199 are extracellular; the sequence is GWSRYIPEGMQCACGIDYYTRAEGYNNES. An N-linked (GlcNAc...) asparagine glycan is attached at asparagine 197. The helical transmembrane segment at 200–221 threads the bilayer; it reads FVIYMFTFHFLFPMFIIFFCYG. Topologically, residues 222-249 are cytoplasmic; that stretch reads RLLCAVKEAAAAQQESETTQRAEREVTR. Residues 250 to 271 traverse the membrane as a helical segment; sequence MVILMVIGYLVCWLPYASVAWF. Residues 272 to 283 lie on the Extracellular side of the membrane; the sequence is IFTHKGSEFGPL. Residues 284–305 form a helical membrane-spanning segment; it reads FMAVPSFFAKSSSIYNPIIYIC. Lysine 293 is modified (N6-(retinylidene)lysine). Residues 306 to 347 lie on the Cytoplasmic side of the membrane; the sequence is MNKQFRQCMITTLFCGKNPFEGQEEDSSTKTEASSASSVSPA. Cysteine 320 carries S-palmitoyl cysteine lipidation. A disordered region spans residues 326-347; sequence EGQEEDSSTKTEASSASSVSPA. Over residues 335–347 the composition is skewed to low complexity; it reads KTEASSASSVSPA.

The protein belongs to the G-protein coupled receptor 1 family. Opsin subfamily. Post-translationally, phosphorylated on some or all of the serine and threonine residues present in the C-terminal region. Contains one covalently linked retinal chromophore.

It localises to the membrane. Its subcellular location is the cell projection. The protein resides in the cilium. The protein localises to the photoreceptor outer segment. Functionally, photoreceptor required for image-forming vision at low light intensity. While most salt water fish species use retinal as chromophore, most freshwater fish use 3-dehydroretinal, or a mixture of retinal and 3-dehydroretinal. Light-induced isomerization of 11-cis to all-trans retinal triggers a conformational change that activates signaling via G-proteins. Subsequent receptor phosphorylation mediates displacement of the bound G-protein alpha subunit by arrestin and terminates signaling. The protein is Rhodopsin (rho) of Sargocentron spiniferum (Sabre squirrelfish).